A 103-amino-acid polypeptide reads, in one-letter code: Large ribosomal subunit protein uL24 (103 aa).

The protein belongs to the universal ribosomal protein uL24 family. In terms of assembly, part of the 50S ribosomal subunit.

Its function is as follows. One of two assembly initiator proteins, it binds directly to the 5'-end of the 23S rRNA, where it nucleates assembly of the 50S subunit. In terms of biological role, one of the proteins that surrounds the polypeptide exit tunnel on the outside of the subunit. In Haemophilus influenzae (strain ATCC 51907 / DSM 11121 / KW20 / Rd), this protein is Large ribosomal subunit protein uL24.